The primary structure comprises 62 residues: Translational regulator CsrA (62 aa).

Belongs to the CsrA/RsmA family. As to quaternary structure, homodimer; the beta-strands of each monomer intercalate to form a hydrophobic core, while the alpha-helices form wings that extend away from the core.

The protein resides in the cytoplasm. Its function is as follows. A key translational regulator that binds mRNA to regulate translation initiation and/or mRNA stability. Mediates global changes in gene expression, shifting from rapid growth to stress survival by linking envelope stress, the stringent response and the catabolite repression systems. Usually binds in the 5'-UTR; binding at or near the Shine-Dalgarno sequence prevents ribosome-binding, repressing translation, binding elsewhere in the 5'-UTR can activate translation and/or stabilize the mRNA. Its function is antagonized by small RNA(s). This Idiomarina loihiensis (strain ATCC BAA-735 / DSM 15497 / L2-TR) protein is Translational regulator CsrA.